The following is a 444-amino-acid chain: Methylenetetrahydrofolate--tRNA-(uracil-5-)-methyltransferase TrmFO (444 aa).

10–15 (GAGLAG) contacts FAD.

The protein belongs to the MnmG family. TrmFO subfamily. It depends on FAD as a cofactor.

It localises to the cytoplasm. It carries out the reaction uridine(54) in tRNA + (6R)-5,10-methylene-5,6,7,8-tetrahydrofolate + NADH + H(+) = 5-methyluridine(54) in tRNA + (6S)-5,6,7,8-tetrahydrofolate + NAD(+). It catalyses the reaction uridine(54) in tRNA + (6R)-5,10-methylene-5,6,7,8-tetrahydrofolate + NADPH + H(+) = 5-methyluridine(54) in tRNA + (6S)-5,6,7,8-tetrahydrofolate + NADP(+). Functionally, catalyzes the folate-dependent formation of 5-methyl-uridine at position 54 (M-5-U54) in all tRNAs. This is Methylenetetrahydrofolate--tRNA-(uracil-5-)-methyltransferase TrmFO from Streptococcus agalactiae serotype Ia (strain ATCC 27591 / A909 / CDC SS700).